A 381-amino-acid chain; its full sequence is 1-deoxy-D-xylulose 5-phosphate reductoisomerase (381 aa).

Ser-10, Gly-11, Ser-12, Ile-13, Gly-36, Lys-37, Asn-38, and Asn-121 together coordinate NADPH. Lys-122 contributes to the 1-deoxy-D-xylulose 5-phosphate binding site. NADPH is bound at residue Glu-123. Asp-147 is a binding site for Mn(2+). Ser-148, Glu-149, Ser-173, and His-196 together coordinate 1-deoxy-D-xylulose 5-phosphate. Glu-149 serves as a coordination point for Mn(2+). Gly-202 serves as a coordination point for NADPH. The 1-deoxy-D-xylulose 5-phosphate site is built by Ser-209, Asn-214, Lys-215, and Glu-218. A Mn(2+)-binding site is contributed by Glu-218.

This sequence belongs to the DXR family. Mg(2+) is required as a cofactor. It depends on Mn(2+) as a cofactor.

The catalysed reaction is 2-C-methyl-D-erythritol 4-phosphate + NADP(+) = 1-deoxy-D-xylulose 5-phosphate + NADPH + H(+). Its pathway is isoprenoid biosynthesis; isopentenyl diphosphate biosynthesis via DXP pathway; isopentenyl diphosphate from 1-deoxy-D-xylulose 5-phosphate: step 1/6. In terms of biological role, catalyzes the NADPH-dependent rearrangement and reduction of 1-deoxy-D-xylulose-5-phosphate (DXP) to 2-C-methyl-D-erythritol 4-phosphate (MEP). This Geobacillus sp. (strain WCH70) protein is 1-deoxy-D-xylulose 5-phosphate reductoisomerase.